The following is a 185-amino-acid chain: Photosystem I assembly protein Ycf4 (185 aa).

Helical transmembrane passes span 24-44 (YIIG…SISS) and 66-86 (IIMG…WYMV).

Belongs to the Ycf4 family.

The protein resides in the cellular thylakoid membrane. Functionally, seems to be required for the assembly of the photosystem I complex. This Prochlorococcus marinus (strain MIT 9312) protein is Photosystem I assembly protein Ycf4.